The primary structure comprises 390 residues: Monomeric sarcosine oxidase (390 aa).

FAD is bound at residue 6-36; the sequence is DVIVVGAGSMGMAAGYQLAKQGVKTLLVDAF. C316 carries the S-8alpha-FAD cysteine modification.

In terms of assembly, monomer. FAD is required as a cofactor.

It localises to the cytoplasm. The enzyme catalyses sarcosine + O2 + H2O = formaldehyde + glycine + H2O2. Its activity is regulated as follows. Pyrrole-2-carboxylate is a competitive inhibitor. N-(cyclopropyl)glycine (CPG) is a mechanism-based inhibitor and inactivates the enzyme by covalently modifying the flavin. In terms of biological role, catalyzes the oxidative demethylation of sarcosine. Can also oxidize other secondary amino acids such as N-methyl-L-alanine. The polypeptide is Monomeric sarcosine oxidase (soxA) (Bacillus sp. (strain B-0618)).